Reading from the N-terminus, the 683-residue chain is Long-chain-fatty-acid--CoA ligase 5 (683 aa).

The helical; Signal-anchor for type III membrane protein transmembrane segment at 12–32 (LPTPALICLLTFGTAIFLWLI) threads the bilayer. Residues 33-683 (NRPQPVLPLI…IKSLYESIEE (651 aa)) lie on the Cytoplasmic side of the membrane. Lys-361 is modified (N6-acetyllysine).

It belongs to the ATP-dependent AMP-binding enzyme family. In terms of tissue distribution, expressed most abundantly in the small intestine, and to a much lesser extent in the lung, liver, adrenal gland, adipose tissue and kidney.

Its subcellular location is the mitochondrion. It is found in the endoplasmic reticulum. The protein localises to the mitochondrion outer membrane. The protein resides in the endoplasmic reticulum membrane. It localises to the cell membrane. It catalyses the reaction a long-chain fatty acid + ATP + CoA = a long-chain fatty acyl-CoA + AMP + diphosphate. It carries out the reaction (5Z,8Z,11Z,14Z)-eicosatetraenoate + ATP + CoA = (5Z,8Z,11Z,14Z)-eicosatetraenoyl-CoA + AMP + diphosphate. The catalysed reaction is 15-hydroxy-(5Z,8Z,11Z,13E)-eicosatetraenoate + ATP + CoA = 15-hydroxy-(5Z,8Z,11Z,13E)-eicosatetraenoyl-CoA + AMP + diphosphate. The enzyme catalyses 12-hydroxy-(5Z,8Z,10E,14Z)-eicosatetraenoate + ATP + CoA = 12-hydroxy-(5Z,8Z,10E,14Z)-eicosatetraenoyl-CoA + AMP + diphosphate. It catalyses the reaction 5-hydroxy-(6E,8Z,11Z,14Z)-eicosatetraenoate + ATP + CoA = 5-hydroxy-(6E,8Z,11Z,14Z)-eicosatetraenoyl-CoA + AMP + diphosphate. It carries out the reaction 14,15-epoxy-(5Z,8Z,11Z)-eicosatrienoate + ATP + CoA = 14,15-epoxy-(5Z,8Z,11Z)-eicosatrienoyl-CoA + AMP + diphosphate. The catalysed reaction is 11,12-epoxy-(5Z,8Z,14Z)-eicosatrienoate + ATP + CoA = 11,12-epoxy-(5Z,8Z,14Z)-eicosatrienoyl-CoA + AMP + diphosphate. The enzyme catalyses hexadecanoate + ATP + CoA = hexadecanoyl-CoA + AMP + diphosphate. It catalyses the reaction (E)-hexadec-2-enoate + ATP + CoA = (2E)-hexadecenoyl-CoA + AMP + diphosphate. It carries out the reaction (9Z)-octadecenoate + ATP + CoA = (9Z)-octadecenoyl-CoA + AMP + diphosphate. Functionally, catalyzes the conversion of long-chain fatty acids to their active form acyl-CoAs for both synthesis of cellular lipids, and degradation via beta-oxidation. ACSL5 may sensitize epithelial cells to apoptosis specifically triggered by the death ligand TRAIL at the villus tip of the crypt-villus axis of the small intestine. May have a role in the survival of glioma cells. May activate fatty acids from exogenous sources for the synthesis of triacylglycerol destined for intracellular storage. It was suggested that it may also stimulate fatty acid oxidation. Utilizes a wide range of saturated fatty acids with a preference for C16-C18 unsaturated fatty acids. The polypeptide is Long-chain-fatty-acid--CoA ligase 5 (Rattus norvegicus (Rat)).